A 526-amino-acid polypeptide reads, in one-letter code: Transcription factor kayak (526 aa).

Disordered regions lie at residues 71–165 and 178–221; these read PPLA…GTGG and RNTN…NKQA. 2 stretches are compositionally biased toward low complexity: residues 78-87 and 133-153; these read NNNNNNNNNG and ISDT…HMMG. Gly residues predominate over residues 154 to 165; sequence NSGGGNGGGTGG. Residues 178 to 187 show a composition bias toward polar residues; it reads RNTNTSNSAT. Residues 208–271 form the bZIP domain; the sequence is EEKRRIRRER…NQLEYFLQAH (64 aa). Residues 210 to 229 are basic motif; the sequence is KRRIRRERNKQAAARCRKRR. A leucine-zipper region spans residues 236–264; the sequence is LTEEVELLEKRGENLKKEMELLNETKNQL. Residues 301–322 are compositionally biased toward low complexity; the sequence is GSCGSGSSHHNNNSNSNDSSSG. Disordered stretches follow at residues 301 to 345 and 504 to 526; these read GSCG…DLKP and TSQN…LVSL. A compositionally biased stretch (polar residues) spans 330–340; sequence TLNSTGRSNSP. A Phosphoserine modification is found at Ser-339.

Belongs to the bZIP family. Fos subfamily. As to quaternary structure, homodimer. Heterodimer with Jra. The kay-Jra heterodimer binds more stably to the AP-1 site than either of the two proteins alone.

It is found in the nucleus. Developmentally regulated transcription factor AP-1 binds and recognizes the enhancer DNA sequence: 5'-TGA[CG]TCA-3'. May play a role in the function or determination of a particular subset of cells in the developing embryo. It is able to carry out its function either independently of or in conjunction with Jra. The protein is Transcription factor kayak of Drosophila persimilis (Fruit fly).